The primary structure comprises 361 residues: MKKHAIGIAALNALSIDDDGWCQLLPAGHFSARDGRPFDVTGGQGWFIDGEIAGRLVEGVRALNQDVLIDYEHNQLRKDKGLPPEQLVAAGWFNADEMQWREGEGLFIHPRWTAAAQQRIDDGEFGYLSAVFPYDTATGAVLQIRLAALTNDPGATGMKKLTALAADLPDILQQENKPMNETLRKLLARLGVTVPENADITDEQATAALTALDTLEINAGKVAALSAELEKAQKAAVDLTKYVPVESYNALRDELAQATAQSATASLSAVLDKAEQEGRIFKSERTYLEQLGGQIGVAALSAQLEKKQPIAALSAMQTTTAKIPSQEKTAVAVLSADEQAAVKALGITEAEYLKMKQEQEK.

The protein belongs to the peptidase U35 family. Might interact with viral portal protein; this interaction gives rise to an early 25S initiator complex. The scaffolding protein Z and the capsid protein T should then be added to the initiator complex to yield immature prohead. Host GroEL and GroES are also essential for the correct assembly of viral head. In terms of processing, the N-terminus is acetylated.

Its subcellular location is the host cytoplasm. Its function is as follows. Protease I is involved in virion assembly and maturation. Protease I cleaves the portal protein to yield mature procapsids competent for DNA packaging. Isoform scaffold protein Z probably helps the capsid proteins to assemble into a functional capsid. The sequence is that of Protease I (I) from Escherichia phage Mu (Bacteriophage Mu).